The primary structure comprises 132 residues: Large ribosomal subunit protein uL14 (132 aa).

It belongs to the universal ribosomal protein uL14 family. As to quaternary structure, part of the 50S ribosomal subunit. Forms a cluster with proteins L3 and L24e, part of which may contact the 16S rRNA in 2 intersubunit bridges.

Binds to 23S rRNA. Forms part of two intersubunit bridges in the 70S ribosome. In Thermoplasma volcanium (strain ATCC 51530 / DSM 4299 / JCM 9571 / NBRC 15438 / GSS1), this protein is Large ribosomal subunit protein uL14.